The chain runs to 273 residues: Ribosomal RNA small subunit methyltransferase A (273 aa).

S-adenosyl-L-methionine-binding residues include N18, L20, G45, E66, D91, and N113.

It belongs to the class I-like SAM-binding methyltransferase superfamily. rRNA adenine N(6)-methyltransferase family. RsmA subfamily.

It localises to the cytoplasm. It catalyses the reaction adenosine(1518)/adenosine(1519) in 16S rRNA + 4 S-adenosyl-L-methionine = N(6)-dimethyladenosine(1518)/N(6)-dimethyladenosine(1519) in 16S rRNA + 4 S-adenosyl-L-homocysteine + 4 H(+). Functionally, specifically dimethylates two adjacent adenosines (A1518 and A1519) in the loop of a conserved hairpin near the 3'-end of 16S rRNA in the 30S particle. May play a critical role in biogenesis of 30S subunits. The protein is Ribosomal RNA small subunit methyltransferase A of Erwinia tasmaniensis (strain DSM 17950 / CFBP 7177 / CIP 109463 / NCPPB 4357 / Et1/99).